The primary structure comprises 1010 residues: Pre-mRNA-splicing factor cwc22 (1010 aa).

The span at 1 to 10 shows a compositional bias: polar residues; it reads MASADMSPSR. The segment at 1–166 is disordered; the sequence is MASADMSPSR…RTPTPPPVAV (166 aa). Low complexity predominate over residues 18-28; sequence RSPSPRTQSPS. 2 stretches are compositionally biased toward basic and acidic residues: residues 29-39 and 65-78; these read PRDEDGSRSPG and PRRDRSLSPRDQPH. The segment covering 84–109 has biased composition (low complexity); the sequence is RSPTPRSQSPSRRSVRSPSPRQGSPA. Positions 142-158 are enriched in basic and acidic residues; that stretch reads RHRDAGGDYRPVRKERT. The region spanning 222 to 405 is the MIF4G domain; that stretch reads KKSVNGLVNK…EVLFQVRKDK (184 aa). Residues 466 to 498 are disordered; that stretch reads GEASDDDEDDDDDDESESGSESEDEEQKALEIK. The segment covering 468 to 491 has biased composition (acidic residues); the sequence is ASDDDEDDDDDDESESGSESEDEE. Residues 507–623 enclose the MI domain; that stretch reads NLRRTIYLSI…GWHVFSVIHL (117 aa). The segment at 708–1010 is disordered; that stretch reads LPAPPADSDS…SPVAKRGRVD (303 aa). Positions 718–732 are enriched in low complexity; it reads ESVSSYSSYSSYSSR. Positions 753 to 775 are enriched in basic residues; it reads PPRRGRGRSYSRTPSRSRSRSRS. Residues 776–787 show a composition bias toward low complexity; it reads YSRSVSKSVSRS. 2 stretches are compositionally biased toward basic residues: residues 834 to 846 and 899 to 910; these read RRGRSGTRSRSRS and RLRRGSYSRSRS. The span at 911–935 shows a compositional bias: low complexity; sequence RSPIPIRGNGPAGRDTGRAGPAPAR. Residues 936–948 are compositionally biased toward basic residues; it reads GGRRNRSYSRSRT. The span at 961 to 973 shows a compositional bias: low complexity; it reads SRRVVSRSPSPVV. Residues 976–1010 show a composition bias toward basic residues; that stretch reads NKRRRSYSSSRSRSRSSSRSRYRSRSPVAKRGRVD.

The protein belongs to the CWC22 family. Associated with the spliceosome.

It is found in the cytoplasm. The protein localises to the nucleus. Functionally, involved in pre-mRNA splicing. The sequence is that of Pre-mRNA-splicing factor cwc22 (msp-1) from Neurospora crassa (strain ATCC 24698 / 74-OR23-1A / CBS 708.71 / DSM 1257 / FGSC 987).